Here is a 518-residue protein sequence, read N- to C-terminus: MLGAVGRCCTGALQALRPGVTPLKALNGAPAALFSRRDYVAPAAAAAAASGRIVAVIGAVVDVQFDEDLPPILNALEVAGRDTRLVLEVAQHLGENTVRTIAMDGTEGLVRGQKVLDTGAPIRIPVGPETLGRIMNVIGEPIDERGPITTKQTAPIHAEAPEFTDMSVEQEILVTGIKVVDLLAPYAKGGKIGLFGGAGVGKTVLIMELINNVAKAHGGYSVFAGVGERTREGNDLYHEMIESGVINLKDTTSKVALVYGQMNEPPGARARVALTGLTVAEYFRDQEGQDVLLFIDNIFRFTQAGSEVSALLGRIPSAVGYQPTLATDMGTMQERITTTKKGSITSVQAIYVPADDLTDPAPATTFAHLDATTVLSRAIAELGIYPAVDPLDSTSRIMDPNIVGSEHYDVARGVQKILQDYKSLQDIIAILGMDELSEEDKLTVARARKIQRFLSQPFQVAEVFTGHLGKLVPLKDTIKGFKAILGGEYDALPEQAFYMVGPIEEVVQKAEKLAEEHS.

ADP-binding residues include G199, V200, G201, K202, T203, and V204. ATP is bound at residue G199. Phosphate contacts are provided by G199, V200, G201, K202, and T203. 4 residues coordinate ATP: G201, K202, T203, and V204. T203 is a binding site for Mg(2+). Residue E228 coordinates Mg(2+). ATP is bound at residue R229.

The protein belongs to the ATPase alpha/beta chains family. Homotrimer. Component of the ATP synthase complex composed at least of ATP5F1A/subunit alpha, ATP5F1B/subunit beta, ATP5MC1/subunit c (homooctomer), MT-ATP6/subunit a, MT-ATP8/subunit 8, ATP5ME/subunit e, ATP5MF/subunit f, ATP5MG/subunit g, ATP5MK/subunit k, ATP5MJ/subunit j, ATP5F1C/subunit gamma, ATP5F1D/subunit delta, ATP5F1E/subunit epsilon, ATP5PF/subunit F6, ATP5PB/subunit b, ATP5PD/subunit d, ATP5PO/subunit OSCP. ATP synthase complex consists of a soluble F(1) head domain (subunits alpha(3) and beta(3)) - the catalytic core - and a membrane F(0) domain - the membrane proton channel (subunits c, a, 8, e, f, g, k and j). These two domains are linked by a central stalk (subunits gamma, delta, and epsilon) rotating inside the F1 region and a stationary peripheral stalk (subunits F6, b, d, and OSCP).

It is found in the mitochondrion inner membrane. The enzyme catalyses ATP + H2O + 4 H(+)(in) = ADP + phosphate + 5 H(+)(out). Its function is as follows. Catalytic subunit beta, of the mitochondrial membrane ATP synthase complex (F(1)F(0) ATP synthase or Complex V) that produces ATP from ADP in the presence of a proton gradient across the membrane which is generated by electron transport complexes of the respiratory chain. ATP synthase complex consist of a soluble F(1) head domain - the catalytic core - and a membrane F(1) domain - the membrane proton channel. These two domains are linked by a central stalk rotating inside the F(1) region and a stationary peripheral stalk. During catalysis, ATP synthesis in the catalytic domain of F(1) is coupled via a rotary mechanism of the central stalk subunits to proton translocation. In vivo, can only synthesize ATP although its ATP hydrolase activity can be activated artificially in vitro. With the subunit alpha (ATP5F1A), forms the catalytic core in the F(1) domain. The chain is ATP synthase F(1) complex catalytic subunit beta, mitochondrial from Cyprinus carpio (Common carp).